Reading from the N-terminus, the 154-residue chain is NADPH-dependent 7-cyano-7-deazaguanine reductase (154 aa).

Cysteine 52 acts as the Thioimide intermediate in catalysis. The Proton donor role is filled by aspartate 59. Substrate contacts are provided by residues 74-76 (VES) and 93-94 (HE).

It belongs to the GTP cyclohydrolase I family. QueF type 1 subfamily.

Its subcellular location is the cytoplasm. The enzyme catalyses 7-aminomethyl-7-carbaguanine + 2 NADP(+) = 7-cyano-7-deazaguanine + 2 NADPH + 3 H(+). The protein operates within tRNA modification; tRNA-queuosine biosynthesis. Its function is as follows. Catalyzes the NADPH-dependent reduction of 7-cyano-7-deazaguanine (preQ0) to 7-aminomethyl-7-deazaguanine (preQ1). The chain is NADPH-dependent 7-cyano-7-deazaguanine reductase from Sinorhizobium medicae (strain WSM419) (Ensifer medicae).